The following is a 365-amino-acid chain: Peptide chain release factor 2 (365 aa).

Residue Q252 is modified to N5-methylglutamine.

The protein belongs to the prokaryotic/mitochondrial release factor family. Methylated by PrmC. Methylation increases the termination efficiency of RF2.

The protein resides in the cytoplasm. Functionally, peptide chain release factor 2 directs the termination of translation in response to the peptide chain termination codons UGA and UAA. The chain is Peptide chain release factor 2 from Yersinia enterocolitica serotype O:8 / biotype 1B (strain NCTC 13174 / 8081).